Consider the following 77-residue polypeptide: UPF0154 protein LCK_00994 (77 aa).

A helical transmembrane segment spans residues 5–25; it reads FGILIFVLGLVIGLVIGFFVA. The tract at residues 50-77 is disordered; the sequence is SMGQKPSQKKLNQMMAQMKQQSEQSQKK.

It belongs to the UPF0154 family.

The protein localises to the cell membrane. The chain is UPF0154 protein LCK_00994 from Leuconostoc citreum (strain KM20).